Here is a 471-residue protein sequence, read N- to C-terminus: Phosphatidate cytidylyltransferase 3 (471 aa).

The segment at Met1–Ala72 is disordered. Residues Ser21–Gln35 show a composition bias toward polar residues. Helical transmembrane passes span Trp97–Met116, Tyr120–Leu139, Leu149–Gly169, Tyr196–Leu216, Tyr228–Phe250, Trp255–Phe277, Gly293–Gly313, and Phe368–Phe388.

This sequence belongs to the CDS family. Requires Mg(2+) as cofactor.

The protein localises to the membrane. It catalyses the reaction a 1,2-diacyl-sn-glycero-3-phosphate + CTP + H(+) = a CDP-1,2-diacyl-sn-glycerol + diphosphate. The protein operates within phospholipid metabolism; CDP-diacylglycerol biosynthesis; CDP-diacylglycerol from sn-glycerol 3-phosphate: step 3/3. In terms of biological role, may be involved in the synthesis of minor phospholipids and in modulation of IP3-mediated signal transduction. The chain is Phosphatidate cytidylyltransferase 3 from Arabidopsis thaliana (Mouse-ear cress).